The chain runs to 3515 residues: Microtubule-actin cross-linking factor 1, isoforms 6/7 (3515 aa).

7 disordered regions span residues Met-1–Glu-23, Val-108–Phe-136, Val-155–His-196, Thr-965–Thr-1178, Ser-1217–Ala-1298, Glu-1710–Gln-1730, and Pro-3078–Gln-3108. Over residues Pro-120–Asn-129 the composition is skewed to basic and acidic residues. Residues Glu-157 to Asn-245 form a 13 X 13 AA approximate tandem repeat of P-T-S-P-A-A-A-V-P-T-P-E-E region. 2 stretches are compositionally biased toward low complexity: residues Ser-995–Ala-1031 and Thr-1040–Thr-1139. Tandem repeats lie at residues Glu-1012 to Glu-1024, Pro-1026 to Glu-1037, Glu-1038 to Glu-1051, Pro-1052 to Glu-1064, Pro-1065 to Glu-1077, Pro-1078 to Glu-1090, Pro-1091 to Glu-1103, Pro-1104 to Glu-1116, Pro-1117 to Glu-1129, Pro-1130 to Glu-1142, Pro-1143 to Glu-1155, Ser-1156 to Glu-1168, and Ser-1169 to Thr-1178. Residues Pro-1140–Pro-1151 show a composition bias toward pro residues. Low complexity-rich tracts occupy residues Ala-1162–Thr-1178 and Ser-1268–Ala-1298. Residues Ser-1715–Gln-1730 are compositionally biased toward polar residues. EF-hand domains follow at residues His-3168–Pro-3203 and Thr-3204–Ala-3239. Residues Asp-3181, Asp-3183, Asp-3185, Lys-3187, Glu-3192, Asp-3217, Asp-3219, Asp-3221, Tyr-3223, and Glu-3228 each contribute to the Ca(2+) site. The GAR domain occupies Thr-3244–Arg-3316. The segment at Pro-3332–Arg-3515 is disordered. Over residues Ser-3352 to Thr-3386 the composition is skewed to low complexity. Over residues Thr-3402–Lys-3426 the composition is skewed to polar residues. Over residues Ser-3437–Ala-3451 the composition is skewed to low complexity. Positions Glu-3466–Arg-3488 are enriched in polar residues.

The protein localises to the cytoplasm. The protein resides in the cytoskeleton. The sequence is that of Microtubule-actin cross-linking factor 1, isoforms 6/7 from Homo sapiens (Human).